The primary structure comprises 503 residues: Ferulic acid decarboxylase 1 (503 aa).

Mn(2+) contacts are provided by asparagine 170, histidine 193, and glutamate 236. Prenylated FMN is bound by residues 170-175 (NWSIAR), 192-193 (QH), and glutamate 236. Glutamate 285 acts as the Proton donor in catalysis. Lysine 394 is a prenylated FMN binding site.

This sequence belongs to the UbiD family. UbiD-like/FDC subfamily. Homodimer. May form higher order oligomers. It depends on Mn(2+) as a cofactor. Requires prenylated FMN as cofactor.

The protein resides in the cytoplasm. It catalyses the reaction (E)-4-coumarate + H(+) = 4-vinylphenol + CO2. The enzyme catalyses (E)-cinnamate + H(+) = styrene + CO2. The catalysed reaction is (E)-ferulate + H(+) = 2-methoxy-4-vinylphenol + CO2. Functionally, catalyzes the reversible decarboxylation of aromatic carboxylic acids like ferulic acid, p-coumaric acid or cinnamic acid, producing the corresponding vinyl derivatives 4-vinylphenol, 4-vinylguaiacol, and styrene, respectively, which play the role of aroma metabolites. Not essential for ubiquinone synthesis. The polypeptide is Ferulic acid decarboxylase 1 (Saccharomyces cerevisiae (strain ATCC 204508 / S288c) (Baker's yeast)).